The sequence spans 407 residues: Probable cysteine protease atg4 (407 aa).

Cys136 serves as the catalytic Nucleophile. Active-site residues include Asp310 and His312.

It belongs to the peptidase C54 family.

It localises to the cytoplasm. The protein localises to the nucleus. Its subcellular location is the preautophagosomal structure. It catalyses the reaction [protein]-C-terminal L-amino acid-glycyl-phosphatidylethanolamide + H2O = [protein]-C-terminal L-amino acid-glycine + a 1,2-diacyl-sn-glycero-3-phosphoethanolamine. In terms of biological role, cysteine protease that is required for autophagy. Plays a key role in cytoplasm to vacuole transport (Cvt) and autophagy by mediating both proteolytic activation and delipidation of atg8. The protease activity is required for proteolytic activation of atg8 by the cleavage of the C-terminal amino acid of atg8 to reveal a C-terminal glycine. Azg8 ubiquitin-like activity requires the exposure of the glycine at the C-terminus for its conjugation to phosphatidylethanolamine (PE) and its insertion to membranes, which is necessary for autophagy. The atg8-PE conjugate mediates tethering between adjacent membranes and stimulates membrane hemifusion, leading to expansion of the autophagosomal membrane during autophagy. In addition to the protease activity, also catalyzes deconjugation of PE-conjugated forms of atg8 during macroautophagy since atg8 delipidation is required to release the protein from membranes, which facilitates multiple events during macroautophagy, and especially for efficient autophagosome biogenesis, the assembly of atg99-containing tubulovesicular clusters into phagophores/autophagosomes, and for the disassembly of PAS-associated ATG components. Atg8 delipidation by atg4 also recycles atg8-PE generated on inappropriate membranes to maintain a reservoir of unlipidated atg8 that is required for autophagosome formation at the PAS. This Aspergillus oryzae (strain ATCC 42149 / RIB 40) (Yellow koji mold) protein is Probable cysteine protease atg4.